The chain runs to 291 residues: 4-hydroxy-tetrahydrodipicolinate synthase (291 aa).

Thr-44 lines the pyruvate pocket. The Proton donor/acceptor role is filled by Tyr-132. Residue Lys-160 is the Schiff-base intermediate with substrate of the active site. Ile-202 contributes to the pyruvate binding site.

This sequence belongs to the DapA family. As to quaternary structure, homotetramer; dimer of dimers.

It localises to the cytoplasm. It carries out the reaction L-aspartate 4-semialdehyde + pyruvate = (2S,4S)-4-hydroxy-2,3,4,5-tetrahydrodipicolinate + H2O + H(+). The protein operates within amino-acid biosynthesis; L-lysine biosynthesis via DAP pathway; (S)-tetrahydrodipicolinate from L-aspartate: step 3/4. Catalyzes the condensation of (S)-aspartate-beta-semialdehyde [(S)-ASA] and pyruvate to 4-hydroxy-tetrahydrodipicolinate (HTPA). The protein is 4-hydroxy-tetrahydrodipicolinate synthase of Roseobacter denitrificans (strain ATCC 33942 / OCh 114) (Erythrobacter sp. (strain OCh 114)).